The chain runs to 210 residues: Large ribosomal subunit protein uL4 (210 aa).

Over residues 44-54 (QRQGTASTLTR) the composition is skewed to polar residues. The segment at 44–96 (QRQGTASTLTRSEVRGGGRKPYKQKGTGRARQGSIRTPLRPGGGVIFGPKPRS) is disordered. Residues 60 to 71 (GGRKPYKQKGTG) show a composition bias toward basic residues.

The protein belongs to the universal ribosomal protein uL4 family. As to quaternary structure, part of the 50S ribosomal subunit.

Functionally, one of the primary rRNA binding proteins, this protein initially binds near the 5'-end of the 23S rRNA. It is important during the early stages of 50S assembly. It makes multiple contacts with different domains of the 23S rRNA in the assembled 50S subunit and ribosome. Its function is as follows. Forms part of the polypeptide exit tunnel. In Prochlorococcus marinus (strain MIT 9515), this protein is Large ribosomal subunit protein uL4.